We begin with the raw amino-acid sequence, 394 residues long: Na(+)/H(+) antiporter NhaA (394 aa).

Helical transmembrane passes span 14–34 (AGGILLLIAALLAMLCANSVF), 59–79 (LLMWINDGFMAVFFILVGMEV), 95–115 (IFPAFAAIGGMVVPALIYWFI), 125–145 (GWAIPMATDIAFALGIVALLS), 155–175 (FLLALAIIDDIGAIIVIALFF), 177–197 (NELSMLALIIASIAIMILITM), 204–224 (GIIHYVIVGTILWASVLKSGV), 258–278 (WCAFAILPLFAFSNAGVSLAG), 292–312 (ITLGLLIGKPVGVFSFCYLAV), 328–348 (VFAIAVLCGIGFTMSVFIAGL), and 362–382 (LSRLGILIGTSIAAIVGYILL).

It belongs to the NhaA Na(+)/H(+) (TC 2.A.33) antiporter family.

The protein resides in the cell inner membrane. It carries out the reaction Na(+)(in) + 2 H(+)(out) = Na(+)(out) + 2 H(+)(in). Its function is as follows. Na(+)/H(+) antiporter that extrudes sodium in exchange for external protons. This Haemophilus ducreyi (strain 35000HP / ATCC 700724) protein is Na(+)/H(+) antiporter NhaA.